The chain runs to 158 residues: Small ribosomal subunit protein uS19 (158 aa).

The protein belongs to the universal ribosomal protein uS19 family.

In terms of biological role, protein S19 forms a complex with S13 that binds strongly to the 16S ribosomal RNA. The chain is Small ribosomal subunit protein uS19 from Pyrobaculum aerophilum (strain ATCC 51768 / DSM 7523 / JCM 9630 / CIP 104966 / NBRC 100827 / IM2).